The following is a 2890-amino-acid chain: Bifunctional DNA-directed RNA polymerase subunit beta-beta' (2890 aa).

Residues Met-1–Asp-1377 are DNA-directed RNA polymerase subunit beta. The DNA-directed RNA polymerase subunit beta' stretch occupies residues Pro-1384–Ile-2890. Residues Cys-1449, Cys-1451, Cys-1465, and Cys-1468 each contribute to the Zn(2+) site. Mg(2+) contacts are provided by Asp-1849, Asp-1851, and Asp-1853. Zn(2+) is bound by residues Cys-2179, Cys-2253, Cys-2260, and Cys-2263.

The protein in the N-terminal section; belongs to the RNA polymerase beta chain family. It in the C-terminal section; belongs to the RNA polymerase beta' chain family. In terms of assembly, the RNAP catalytic core consists of 2 alpha, 1 beta/beta' and 1 omega subunit. When a sigma factor is associated with the core the holoenzyme is formed, which can initiate transcription. Mg(2+) serves as cofactor. The cofactor is Zn(2+).

The catalysed reaction is RNA(n) + a ribonucleoside 5'-triphosphate = RNA(n+1) + diphosphate. Its function is as follows. DNA-dependent RNA polymerase catalyzes the transcription of DNA into RNA using the four ribonucleoside triphosphates as substrates. The protein is Bifunctional DNA-directed RNA polymerase subunit beta-beta' (rpoBC) of Helicobacter acinonychis (strain Sheeba).